The primary structure comprises 550 residues: Hydroxylamine reductase (550 aa).

Residues C3, C6, C18, and C25 each contribute to the [2Fe-2S] cluster site. Hybrid [4Fe-2O-2S] cluster is bound by residues H249, E273, C317, C405, C433, C458, E492, and K494. C405 is subject to Cysteine persulfide.

It belongs to the HCP family. It depends on [2Fe-2S] cluster as a cofactor. Requires hybrid [4Fe-2O-2S] cluster as cofactor.

The protein resides in the cytoplasm. It carries out the reaction A + NH4(+) + H2O = hydroxylamine + AH2 + H(+). Functionally, catalyzes the reduction of hydroxylamine to form NH(3) and H(2)O. In Salmonella typhimurium (strain LT2 / SGSC1412 / ATCC 700720), this protein is Hydroxylamine reductase.